Here is a 322-residue protein sequence, read N- to C-terminus: NADH-quinone oxidoreductase subunit H (322 aa).

The next 8 helical transmembrane spans lie at 12-32, 79-99, 111-131, 151-171, 183-203, 234-254, 262-282, and 301-321; these read IGKA…MSFI, IFVL…AVVP, VGLL…LFAG, LSYE…TGSF, LWNV…GVAV, FFVG…TLFF, LPPF…FILL, and VCLP…LMNA.

The protein belongs to the complex I subunit 1 family. NDH-1 is composed of 14 different subunits. Subunits NuoA, H, J, K, L, M, N constitute the membrane sector of the complex.

Its subcellular location is the cell inner membrane. It carries out the reaction a quinone + NADH + 5 H(+)(in) = a quinol + NAD(+) + 4 H(+)(out). Its function is as follows. NDH-1 shuttles electrons from NADH, via FMN and iron-sulfur (Fe-S) centers, to quinones in the respiratory chain. The immediate electron acceptor for the enzyme in this species is believed to be ubiquinone. Couples the redox reaction to proton translocation (for every two electrons transferred, four hydrogen ions are translocated across the cytoplasmic membrane), and thus conserves the redox energy in a proton gradient. This subunit may bind ubiquinone. The sequence is that of NADH-quinone oxidoreductase subunit H from Aeromonas hydrophila subsp. hydrophila (strain ATCC 7966 / DSM 30187 / BCRC 13018 / CCUG 14551 / JCM 1027 / KCTC 2358 / NCIMB 9240 / NCTC 8049).